We begin with the raw amino-acid sequence, 931 residues long: Bifunctional uridylyltransferase/uridylyl-removing enzyme (931 aa).

The tract at residues 1–383 (MDSVTPNSRP…KTGNSWRRVP (383 aa)) is uridylyltransferase. A uridylyl-removing region spans residues 384–739 (ESDDFIVDNN…VGFDPARGVT (356 aa)). The region spanning 499-622 (VDEHLIRCIG…VQSVEQMKLL (124 aa)) is the HD domain. ACT domains follow at residues 740 to 822 (ELTI…AVAR) and 851 to 931 (VIEV…QPAA).

It belongs to the GlnD family. Requires Mg(2+) as cofactor.

The catalysed reaction is [protein-PII]-L-tyrosine + UTP = [protein-PII]-uridylyl-L-tyrosine + diphosphate. It catalyses the reaction [protein-PII]-uridylyl-L-tyrosine + H2O = [protein-PII]-L-tyrosine + UMP + H(+). Its activity is regulated as follows. Uridylyltransferase (UTase) activity is inhibited by glutamine, while glutamine activates uridylyl-removing (UR) activity. In terms of biological role, modifies, by uridylylation and deuridylylation, the PII regulatory proteins (GlnB and homologs), in response to the nitrogen status of the cell that GlnD senses through the glutamine level. Under low glutamine levels, catalyzes the conversion of the PII proteins and UTP to PII-UMP and PPi, while under higher glutamine levels, GlnD hydrolyzes PII-UMP to PII and UMP (deuridylylation). Thus, controls uridylylation state and activity of the PII proteins, and plays an important role in the regulation of nitrogen fixation and metabolism. The sequence is that of Bifunctional uridylyltransferase/uridylyl-removing enzyme from Bradyrhizobium sp. (strain BTAi1 / ATCC BAA-1182).